Here is a 444-residue protein sequence, read N- to C-terminus: Tol-Pal system protein TolB (444 aa).

A signal peptide spans 1–31 (MSFDLNRRQLMISAATAAGALALGPARDAFG).

It belongs to the TolB family. The Tol-Pal system is composed of five core proteins: the inner membrane proteins TolA, TolQ and TolR, the periplasmic protein TolB and the outer membrane protein Pal. They form a network linking the inner and outer membranes and the peptidoglycan layer.

It is found in the periplasm. In terms of biological role, part of the Tol-Pal system, which plays a role in outer membrane invagination during cell division and is important for maintaining outer membrane integrity. This Rhodopseudomonas palustris (strain ATCC BAA-98 / CGA009) protein is Tol-Pal system protein TolB.